Reading from the N-terminus, the 376-residue chain is Natterin-2 (376 aa).

A signal peptide spans 1–18 (MNLSVLLVTLLLLSWTSA). Residues 19 to 27 (EKDLKVRVA) constitute a propeptide that is removed on maturation.

The protein belongs to the natterin family. Post-translationally, contains 4 disulfide bonds. In terms of tissue distribution, expressed by the venom gland.

It localises to the secreted. Its activity is regulated as follows. Inhibited by tissue-kallikrein inhibitor TKI and trasylol. Plasma kallikrein inhibitor PKSI527 and classical inhibitors of serine-, metallo-, thiol- or aspartate-peptidases evokes a minor inhibition of the peptide digestion. Functionally, shows nociceptive, edema-inducing and kininogenase activity with release of kallidin from low molecular weight kininogen. The cleavage occurs at Met-Lys bonds. The chain is Natterin-2 from Thalassophryne nattereri (Copper Joe toadfish).